Reading from the N-terminus, the 382-residue chain is Alanine racemase (382 aa).

The Proton acceptor; specific for D-alanine role is filled by lysine 39. Lysine 39 carries the N6-(pyridoxal phosphate)lysine modification. Arginine 138 contacts substrate. Residue tyrosine 265 is the Proton acceptor; specific for L-alanine of the active site. Position 312 (methionine 312) interacts with substrate.

The protein belongs to the alanine racemase family. Requires pyridoxal 5'-phosphate as cofactor.

It carries out the reaction L-alanine = D-alanine. It functions in the pathway amino-acid biosynthesis; D-alanine biosynthesis; D-alanine from L-alanine: step 1/1. In terms of biological role, catalyzes the interconversion of L-alanine and D-alanine. May also act on other amino acids. The polypeptide is Alanine racemase (alr) (Staphylococcus saprophyticus subsp. saprophyticus (strain ATCC 15305 / DSM 20229 / NCIMB 8711 / NCTC 7292 / S-41)).